The primary structure comprises 288 residues: Large ribosomal subunit protein uL2 (288 aa).

The disordered stretch occupies residues 232 to 265; that stretch reads GTAMNPVDHPHGGGEGKTKGKHPESPWGWKTKGY. Over residues 239–255 the composition is skewed to basic and acidic residues; the sequence is DHPHGGGEGKTKGKHPE.

It belongs to the universal ribosomal protein uL2 family. As to quaternary structure, part of the 50S ribosomal subunit. Forms a bridge to the 30S subunit in the 70S ribosome.

One of the primary rRNA binding proteins. Required for association of the 30S and 50S subunits to form the 70S ribosome, for tRNA binding and peptide bond formation. It has been suggested to have peptidyltransferase activity; this is somewhat controversial. Makes several contacts with the 16S rRNA in the 70S ribosome. This Hydrogenobaculum sp. (strain Y04AAS1) protein is Large ribosomal subunit protein uL2.